Consider the following 909-residue polypeptide: Tubulin polyglutamylase TTLL7 (909 aa).

One can recognise a TTL domain in the interval 40–392; it reads NGAITANVVG…RASDKKKNLA (353 aa). ATP-binding positions include Lys-162, 168-169, 190-193, and 203-205; these read MG, QEYL, and KFD. Position 229 (Arg-229) interacts with L-glutamate. ATP is bound at residue 251-252; that stretch reads TN. Residues Tyr-253, Ser-254, and Lys-273 each contribute to the L-glutamate site. 3 residues coordinate Mg(2+): Asp-338, Glu-351, and Asn-353. Lys-369 provides a ligand contact to L-glutamate. The c-MTBD region stretch occupies residues 390-452; it reads NLAKQKAEAQ…ISREEYENRH (63 aa). Disordered regions lie at residues 517 to 580 and 603 to 688; these read DEKL…KVSY and KAAR…PSIS. The span at 518–531 shows a compositional bias: basic and acidic residues; the sequence is EKLSGKPTRPKEPR. The segment covering 532-542 has biased composition (polar residues); that stretch reads TLSSMPESTQT. Low complexity predominate over residues 548–562; sequence NYSSHSSSNSTGSSS. A compositionally biased stretch (basic and acidic residues) spans 571 to 580; sequence KEGKEKKVSY. The segment covering 604 to 625 has biased composition (low complexity); sequence AARPFSNSSSPSSAASMRRSVS. The span at 626 to 657 shows a compositional bias: polar residues; sequence CPRSITALNTQSPTTDQRPFSSRISSTITRPL. The span at 658–673 shows a compositional bias: low complexity; it reads SGNRTNSLNRSSSSNR. A compositionally biased stretch (polar residues) spans 674-688; the sequence is VPQSGTSGSVYPSIS.

Belongs to the tubulin--tyrosine ligase family. In terms of assembly, interacts with both alpha- and beta-tubulin (via C-terminal tubulin tails). Mg(2+) is required as a cofactor.

It localises to the cell projection. The protein resides in the cilium. Its subcellular location is the cytoplasm. It is found in the cytoskeleton. The protein localises to the cilium basal body. It localises to the dendrite. The protein resides in the perikaryon. It catalyses the reaction L-glutamyl-[protein] + L-glutamate + ATP = gamma-L-glutamyl-L-glutamyl-[protein] + ADP + phosphate + H(+). The enzyme catalyses (L-glutamyl)(n)-gamma-L-glutamyl-L-glutamyl-[protein] + L-glutamate + ATP = (L-glutamyl)(n+1)-gamma-L-glutamyl-L-glutamyl-[protein] + ADP + phosphate + H(+). Its function is as follows. Polyglutamylase which modifies tubulin, generating polyglutamate side chains of variable lengths on the gamma-carboxyl group of specific glutamate residues within the C-terminal tail of tubulin. Mediates both ATP-dependent initiation and elongation steps of the polyglutamylation reaction. Preferentially modifies the beta-tubulin tail over an alpha-tail. Competes with monoglycylase TTLL3 for modification site on beta-tubulin substrate, thereby creating an anticorrelation between glycylation and glutamylation reactions. This is Tubulin polyglutamylase TTLL7 from Xenopus tropicalis (Western clawed frog).